The following is a 207-amino-acid chain: Ribonuclease HII (207 aa).

Residues 20 to 207 enclose the RNase H type-2 domain; the sequence is QLFAGVDEVG…KPVKRVLGIE (188 aa). 3 residues coordinate a divalent metal cation: aspartate 26, glutamate 27, and aspartate 118.

The protein belongs to the RNase HII family. Mn(2+) serves as cofactor. Mg(2+) is required as a cofactor.

The protein localises to the cytoplasm. It carries out the reaction Endonucleolytic cleavage to 5'-phosphomonoester.. Endonuclease that specifically degrades the RNA of RNA-DNA hybrids. In Aliivibrio fischeri (strain MJ11) (Vibrio fischeri), this protein is Ribonuclease HII.